Consider the following 211-residue polypeptide: Uracil phosphoribosyltransferase (211 aa).

Residues arginine 78, arginine 103, and 130–138 (DPMLATGNS) contribute to the 5-phospho-alpha-D-ribose 1-diphosphate site. Uracil-binding positions include isoleucine 193 and 198-200 (GDA). Aspartate 199 serves as a coordination point for 5-phospho-alpha-D-ribose 1-diphosphate.

It belongs to the UPRTase family. Mg(2+) serves as cofactor.

The enzyme catalyses UMP + diphosphate = 5-phospho-alpha-D-ribose 1-diphosphate + uracil. It participates in pyrimidine metabolism; UMP biosynthesis via salvage pathway; UMP from uracil: step 1/1. Allosterically activated by GTP. Functionally, catalyzes the conversion of uracil and 5-phospho-alpha-D-ribose 1-diphosphate (PRPP) to UMP and diphosphate. The chain is Uracil phosphoribosyltransferase from Acinetobacter baumannii (strain AB307-0294).